The following is a 236-amino-acid chain: Biosynthetic peptidoglycan transglycosylase (236 aa).

Residues 12 to 31 (ALLWFAAGSVLVVLVLRWVP) form a helical membrane-spanning segment.

The protein belongs to the glycosyltransferase 51 family.

It is found in the cell inner membrane. The catalysed reaction is [GlcNAc-(1-&gt;4)-Mur2Ac(oyl-L-Ala-gamma-D-Glu-L-Lys-D-Ala-D-Ala)](n)-di-trans,octa-cis-undecaprenyl diphosphate + beta-D-GlcNAc-(1-&gt;4)-Mur2Ac(oyl-L-Ala-gamma-D-Glu-L-Lys-D-Ala-D-Ala)-di-trans,octa-cis-undecaprenyl diphosphate = [GlcNAc-(1-&gt;4)-Mur2Ac(oyl-L-Ala-gamma-D-Glu-L-Lys-D-Ala-D-Ala)](n+1)-di-trans,octa-cis-undecaprenyl diphosphate + di-trans,octa-cis-undecaprenyl diphosphate + H(+). Its pathway is cell wall biogenesis; peptidoglycan biosynthesis. Functionally, peptidoglycan polymerase that catalyzes glycan chain elongation from lipid-linked precursors. In Pseudomonas savastanoi pv. phaseolicola (strain 1448A / Race 6) (Pseudomonas syringae pv. phaseolicola (strain 1448A / Race 6)), this protein is Biosynthetic peptidoglycan transglycosylase.